Reading from the N-terminus, the 344-residue chain is GTP 3',8-cyclase (344 aa).

The 227-residue stretch at 19-245 (PFGRAVTYLR…DIPYRTGGPA (227 aa)) folds into the Radical SAM core domain. Residue arginine 28 coordinates GTP. [4Fe-4S] cluster-binding residues include cysteine 35 and cysteine 39. Tyrosine 41 serves as a coordination point for S-adenosyl-L-methionine. Position 42 (cysteine 42) interacts with [4Fe-4S] cluster. Residue arginine 77 participates in GTP binding. Glycine 81 serves as a coordination point for S-adenosyl-L-methionine. Position 111 (threonine 111) interacts with GTP. Serine 135 contacts S-adenosyl-L-methionine. Lysine 171 contacts GTP. Methionine 205 provides a ligand contact to S-adenosyl-L-methionine. Residues cysteine 268 and cysteine 271 each coordinate [4Fe-4S] cluster. A GTP-binding site is contributed by 273 to 275 (RVR). [4Fe-4S] cluster is bound at residue cysteine 285.

The protein belongs to the radical SAM superfamily. MoaA family. Monomer and homodimer. The cofactor is [4Fe-4S] cluster.

The enzyme catalyses GTP + AH2 + S-adenosyl-L-methionine = (8S)-3',8-cyclo-7,8-dihydroguanosine 5'-triphosphate + 5'-deoxyadenosine + L-methionine + A + H(+). The protein operates within cofactor biosynthesis; molybdopterin biosynthesis. In terms of biological role, catalyzes the cyclization of GTP to (8S)-3',8-cyclo-7,8-dihydroguanosine 5'-triphosphate. The chain is GTP 3',8-cyclase from Brucella melitensis biotype 2 (strain ATCC 23457).